A 72-amino-acid polypeptide reads, in one-letter code: Translation initiation factor IF-1 (72 aa).

The S1-like domain maps to 1–72 (MAKEESIEVE…SKGRITYRYK (72 aa)).

Belongs to the IF-1 family. Component of the 30S ribosomal translation pre-initiation complex which assembles on the 30S ribosome in the order IF-2 and IF-3, IF-1 and N-formylmethionyl-tRNA(fMet); mRNA recruitment can occur at any time during PIC assembly.

The protein resides in the cytoplasm. Functionally, one of the essential components for the initiation of protein synthesis. Stabilizes the binding of IF-2 and IF-3 on the 30S subunit to which N-formylmethionyl-tRNA(fMet) subsequently binds. Helps modulate mRNA selection, yielding the 30S pre-initiation complex (PIC). Upon addition of the 50S ribosomal subunit IF-1, IF-2 and IF-3 are released leaving the mature 70S translation initiation complex. The chain is Translation initiation factor IF-1 from Chlorobaculum tepidum (strain ATCC 49652 / DSM 12025 / NBRC 103806 / TLS) (Chlorobium tepidum).